The following is a 154-amino-acid chain: Endoribonuclease YbeY (154 aa).

H118, H122, and H128 together coordinate Zn(2+).

Belongs to the endoribonuclease YbeY family. It depends on Zn(2+) as a cofactor.

It localises to the cytoplasm. Its function is as follows. Single strand-specific metallo-endoribonuclease involved in late-stage 70S ribosome quality control and in maturation of the 3' terminus of the 16S rRNA. The chain is Endoribonuclease YbeY from Macrococcus caseolyticus (strain JCSC5402) (Macrococcoides caseolyticum).